A 137-amino-acid polypeptide reads, in one-letter code: Small ribosomal subunit protein bS16m (137 aa).

The transit peptide at M1–I34 directs the protein to the mitochondrion. Residue T130 is modified to Phosphothreonine.

The protein belongs to the bacterial ribosomal protein bS16 family. Component of the mitochondrial ribosome small subunit (28S) which comprises a 12S rRNA and about 30 distinct proteins.

Its subcellular location is the mitochondrion. This chain is Small ribosomal subunit protein bS16m (MRPS16), found in Pongo abelii (Sumatran orangutan).